Consider the following 1191-residue polypeptide: Pyruvate-flavodoxin oxidoreductase (1191 aa).

2 consecutive 4Fe-4S ferredoxin-type domains span residues 687–716 and 744–773; these read QVCS…VKAV and YVLA…TGAR. [4Fe-4S] cluster is bound by residues Cys-696, Cys-699, Cys-702, Cys-706, Cys-753, Cys-756, Cys-759, Cys-763, Cys-825, Cys-828, Cys-853, and Cys-1085.

This sequence belongs to the pyruvate:ferredoxin/flavodoxin oxidoreductase family. The cofactor is [4Fe-4S] cluster.

The enzyme catalyses oxidized [flavodoxin] + pyruvate + CoA + 2 H(+) = reduced [flavodoxin] + acetyl-CoA + CO2. Functionally, oxidoreductase required for the transfer of electrons from pyruvate to flavodoxin, which reduces nitrogenase. The chain is Pyruvate-flavodoxin oxidoreductase (nifJ) from Rhodospirillum rubrum (strain ATCC 11170 / ATH 1.1.1 / DSM 467 / LMG 4362 / NCIMB 8255 / S1).